Reading from the N-terminus, the 473-residue chain is Photosystem II CP43 reaction center protein (473 aa).

A propeptide spanning residues 1–14 is cleaved from the precursor; that stretch reads MKTLYSLRRFYHVE. Thr15 carries the N-acetylthreonine modification. Residue Thr15 is modified to Phosphothreonine. A run of 5 helical transmembrane segments spans residues 69–93, 134–155, 178–200, 255–275, and 291–312; these read LFEVAHFVPEKPMYEQGLILLPHLA, LLGPETLEESFPFFGYVWKDRN, KALYFGGVYDTWAPGGGDVRKIT, KPFAWARRALVWSGEAYLSYS, and CFNNTAYPSEFYGPTGPEASQA. Glu367 is a binding site for [CaMn4O5] cluster. Residues 447-471 form a helical membrane-spanning segment; that stretch reads RARAAAAGFEKGIDRDFEPVLSMTP.

It belongs to the PsbB/PsbC family. PsbC subfamily. PSII is composed of 1 copy each of membrane proteins PsbA, PsbB, PsbC, PsbD, PsbE, PsbF, PsbH, PsbI, PsbJ, PsbK, PsbL, PsbM, PsbT, PsbX, PsbY, PsbZ, Psb30/Ycf12, at least 3 peripheral proteins of the oxygen-evolving complex and a large number of cofactors. It forms dimeric complexes. The cofactor is Binds multiple chlorophylls and provides some of the ligands for the Ca-4Mn-5O cluster of the oxygen-evolving complex. It may also provide a ligand for a Cl- that is required for oxygen evolution. PSII binds additional chlorophylls, carotenoids and specific lipids..

The protein localises to the plastid. Its subcellular location is the chloroplast thylakoid membrane. Functionally, one of the components of the core complex of photosystem II (PSII). It binds chlorophyll and helps catalyze the primary light-induced photochemical processes of PSII. PSII is a light-driven water:plastoquinone oxidoreductase, using light energy to abstract electrons from H(2)O, generating O(2) and a proton gradient subsequently used for ATP formation. This is Photosystem II CP43 reaction center protein from Jasminum nudiflorum (Winter jasmine).